A 75-amino-acid polypeptide reads, in one-letter code: Pi-hexatoxin-Hi1d (75 aa).

6 cysteine pairs are disulfide-bonded: cysteine 3–cysteine 18, cysteine 10–cysteine 23, cysteine 17–cysteine 33, cysteine 40–cysteine 55, cysteine 47–cysteine 60, and cysteine 54–cysteine 71. Domain repeat units lie at residues 3–33 (CIRKWLSCVDRKNDCCEGLECYKRRHSFEVC) and 40–71 (CLVKWKQCDGRERDCCAGLECWKRSGNKSSVC). Residues 3–71 (CIRKWLSCVD…KRSGNKSSVC (69 aa)) are 2 X approximate repeats with cysteine pattern C-C-CC-C-C.

This sequence belongs to the psalmotoxin-1 family. Double-knot toxin subfamily. As to expression, expressed by the venom gland.

The protein resides in the secreted. Functionally, this toxin potently and selectively inhibits ASIC1a, an isoform of the gene ASIC1. It incompletely inhibits ASIC1a activation in a pH-independent and slowly reversible manner. This toxin acts by binding to and stabilizing the closed state of the channel, thereby impeding the transition into a conducting state. This toxin may bind to the acidic pocket of ASIC1a, since mutation of a key residue of this pocket (Arg-350) abolishes the ability of the toxin to inhibit ASIC1a. In vivo, this toxin protects the brain from neuronal injury when administered up to 8 hours after stroke onset. This is Pi-hexatoxin-Hi1d from Hadronyche infensa (Fraser island funnel-web spider).